The following is a 225-amino-acid chain: Thaumatin-like protein (225 aa).

The N-terminal stretch at 1–24 (MSTFKSLSLSALLFIAFLFTCARG) is a signal peptide. 8 cysteine pairs are disulfide-bonded: C33–C224, C74–C84, C89–C95, C140–C213, C146–C196, C154–C164, C168–C177, and C178–C183. N187 is a glycosylation site (N-linked (GlcNAc...) asparagine).

The protein belongs to the thaumatin family. Post-translationally, N-glycosylated. Woody stem plug.

The protein localises to the secreted. Has antifungal activity. The chain is Thaumatin-like protein (tlp) from Actinidia deliciosa (Kiwi).